A 593-amino-acid polypeptide reads, in one-letter code: NADH-quinone oxidoreductase subunit C/D (593 aa).

The interval 1 to 184 (MTADSALYIP…DPYSLSAAKQ (184 aa)) is NADH dehydrogenase I subunit C. An NADH dehydrogenase I subunit D region spans residues 208–593 (DYMFLNLGPN…IDFVMADVDR (386 aa)).

It in the N-terminal section; belongs to the complex I 30 kDa subunit family. The protein in the C-terminal section; belongs to the complex I 49 kDa subunit family. NDH-1 is composed of 13 different subunits. Subunits NuoB, CD, E, F, and G constitute the peripheral sector of the complex.

It is found in the cell inner membrane. It carries out the reaction a quinone + NADH + 5 H(+)(in) = a quinol + NAD(+) + 4 H(+)(out). NDH-1 shuttles electrons from NADH, via FMN and iron-sulfur (Fe-S) centers, to quinones in the respiratory chain. The immediate electron acceptor for the enzyme in this species is believed to be ubiquinone. Couples the redox reaction to proton translocation (for every two electrons transferred, four hydrogen ions are translocated across the cytoplasmic membrane), and thus conserves the redox energy in a proton gradient. This chain is NADH-quinone oxidoreductase subunit C/D, found in Pseudomonas paraeruginosa (strain DSM 24068 / PA7) (Pseudomonas aeruginosa (strain PA7)).